A 395-amino-acid chain; its full sequence is Secreted aspartyl protease 1 (395 aa).

The N-terminal stretch at 1–20 is a signal peptide; that stretch reads MQLSIQAIIGFVVAAGLAVA. The propeptide at 21–88 is removed in mature form; the sequence is SELPSPMTVN…HLLLDLIDKR (68 aa). Asn41 is a glycosylation site (N-linked (GlcNAc...) asparagine). Positions 105-391 constitute a Peptidase A1 domain; sequence WAGDVQFGQS…DMGKNRMGFA (287 aa). Catalysis depends on residues Asp121 and Asp283. Cys321 and Cys352 form a disulfide bridge.

Belongs to the peptidase A1 family.

It is found in the secreted. With respect to regulation, inhibited by pepstatin A. In terms of biological role, dominant secreted aspartyl protease that has a clear preference for aromatic residues in the P1' position directly adjacent to the cleavage site and, in particular, Trp. In addition, it generally cleaves peptides containing Lys, Arg, Phe, Tyr, or Nle (norleucine) in the P1 position, Nle and Glu at P2, and Arg and Val at P2'. Has important roles in facilitating the interaction of the yeast with the external environment. Is able to rapidly hydrolyze Staphylococcus aureus protein A, an important S.aureus virulence factor involved in immune evasion and biofilm formation. Shows anti-biofilm properties and thus plays a role in inter-kingdom interactions, beneficial for host skin health. In Malassezia globosa (strain ATCC MYA-4612 / CBS 7966) (Dandruff-associated fungus), this protein is Secreted aspartyl protease 1.